Reading from the N-terminus, the 219-residue chain is MASTEPERENREDETEVNEDEDTGAQVAPIVRLEEVAVTTGEEDEDAVLDLKSKMYRFDKEGNQWKERGAGTVKLLKHKETGKVRLVMRQSKTLKICANHLISSGMSVQEHSGNEKSCLWHATDFSDGELKDELFCIRFASIENCKTFMEKFTEIAESQQVGKESTQGDEAAGLIENLSVEENISEEKAKEAEEKEPAKEDKETKKEKVEEEKKTEAST.

Over residues 1 to 11 (MASTEPERENR) the composition is skewed to basic and acidic residues. Disordered stretches follow at residues 1–30 (MASTEPERENREDETEVNEDEDTGAQVAPI) and 160–219 (QVGK…EAST). A compositionally biased stretch (acidic residues) spans 12–23 (EDETEVNEDEDT). Residues 26–161 (QVAPIVRLEE…FTEIAESQQV (136 aa)) enclose the RanBD1 domain. Basic and acidic residues predominate over residues 185–219 (SEEKAKEAEEKEPAKEDKETKKEKVEEEKKTEAST).

The protein resides in the nucleus. The protein localises to the nuclear pore complex. This chain is Ran-binding protein 1 homolog c (RANBP1C), found in Arabidopsis thaliana (Mouse-ear cress).